The following is a 185-amino-acid chain: Prenylated Rab acceptor protein 1 (185 aa).

Topologically, residues 1–78 are cytoplasmic; the sequence is MAAQKDQQKD…RNVEYYQSNY (78 aa). The tract at residues 30–54 is required for interaction with prenylated RAB3A and VAMP2; the sequence is AGREWLERRRATIRPWGTFVDQQRF. Helical transmembrane passes span 79 to 94 and 95 to 112; these read VFVFLGLILYCVVTSP and MLLVALAVFFGACYILYL. Residues 113–131 are Cytoplasmic-facing; sequence RTLQSKLVLFGREVSPAHQ. A run of 2 helical transmembrane segments spans residues 132–148 and 149–165; these read YALAGGVSFPFFWLAGA and GSAVFWVLGATLVLIGS. A required for interaction with GDI1 region spans residues 165 to 185; that stretch reads SHAAFHQMEPADGEELQMEPV. Residues 166 to 185 are Cytoplasmic-facing; the sequence is HAAFHQMEPADGEELQMEPV. Residues 175–185 form a required for interaction with prenylated RAB3A and VAMP2 region; it reads ADGEELQMEPV. Residues 175–185 form a homodimerization region; sequence ADGEELQMEPV.

It belongs to the PRA1 family. Homodimer. Interacts with VAMP2 (synaptobrevin-2), GDI1, NRDG1 and PCLO. Interacts with prenylated Rab proteins (including RAB5 and RAB6), and with the members of the Ras superfamily HRAS, RHOA, TC21, and RAP1A.

The protein resides in the cell membrane. It is found in the cytoplasm. Its subcellular location is the golgi apparatus. The protein localises to the cytoplasmic vesicle. It localises to the secretory vesicle. The protein resides in the synaptic vesicle. Functionally, general Rab protein regulator required for vesicle formation from the Golgi complex. May control vesicle docking and fusion by mediating the action of Rab GTPases to the SNARE complexes. In addition it inhibits the removal of Rab GTPases from the membrane by GDI1. The protein is Prenylated Rab acceptor protein 1 (Rabac1) of Mus musculus (Mouse).